The primary structure comprises 230 residues: Urease accessory protein UreF (230 aa).

It belongs to the UreF family. In terms of assembly, ureD, UreF and UreG form a complex that acts as a GTP-hydrolysis-dependent molecular chaperone, activating the urease apoprotein by helping to assemble the nickel containing metallocenter of UreC. The UreE protein probably delivers the nickel.

The protein resides in the cytoplasm. Required for maturation of urease via the functional incorporation of the urease nickel metallocenter. In Polynucleobacter asymbioticus (strain DSM 18221 / CIP 109841 / QLW-P1DMWA-1) (Polynucleobacter necessarius subsp. asymbioticus), this protein is Urease accessory protein UreF.